A 182-amino-acid polypeptide reads, in one-letter code: Adenine phosphoribosyltransferase (182 aa).

It belongs to the purine/pyrimidine phosphoribosyltransferase family. In terms of assembly, homodimer.

Its subcellular location is the cytoplasm. It carries out the reaction AMP + diphosphate = 5-phospho-alpha-D-ribose 1-diphosphate + adenine. Its pathway is purine metabolism; AMP biosynthesis via salvage pathway; AMP from adenine: step 1/1. Its function is as follows. Catalyzes a salvage reaction resulting in the formation of AMP, that is energically less costly than de novo synthesis. This chain is Adenine phosphoribosyltransferase, found in Pseudomonas putida (strain GB-1).